Here is a 118-residue protein sequence, read N- to C-terminus: MSRVKRGVTARARHKKVLNQAKGYYGARSRVYRVAKQAVIKAGQYAYRDRKVKKRTFRSLWIVRINAAARQHDISYSQLINGLNKAGIELDRKALAELAVYNKDAFAAVVEKAKAALA.

Belongs to the bacterial ribosomal protein bL20 family.

Its function is as follows. Binds directly to 23S ribosomal RNA and is necessary for the in vitro assembly process of the 50S ribosomal subunit. It is not involved in the protein synthesizing functions of that subunit. This is Large ribosomal subunit protein bL20 from Francisella tularensis subsp. novicida (strain U112).